Reading from the N-terminus, the 95-residue chain is UPF0213 protein YPK_3712 (95 aa).

Residues 4–79 enclose the GIY-YIG domain; that stretch reads SLWHLYLLRT…KQLSKQQKEK (76 aa).

The protein belongs to the UPF0213 family.

The sequence is that of UPF0213 protein YPK_3712 from Yersinia pseudotuberculosis serotype O:3 (strain YPIII).